The chain runs to 246 residues: Protein DEHYDRATION-INDUCED 19 homolog 3 (246 aa).

Positions 185 to 230 (ERSKAPVPIPDDTSIHKDTPAQPWESRIDSSLTSEEREQKRKQATD) are disordered. Basic and acidic residues predominate over residues 218 to 229 (SEEREQKRKQAT).

It belongs to the Di19 family.

The protein is Protein DEHYDRATION-INDUCED 19 homolog 3 (DI19-3) of Oryza sativa subsp. japonica (Rice).